The chain runs to 51 residues: Large ribosomal subunit protein eL39 (51 aa).

Residues 32 to 51 (KRRVTRSPARRHWRRQKLKA) form a disordered region.

The protein belongs to the eukaryotic ribosomal protein eL39 family.

The protein is Large ribosomal subunit protein eL39 of Pyrobaculum calidifontis (strain DSM 21063 / JCM 11548 / VA1).